We begin with the raw amino-acid sequence, 557 residues long: Formate--tetrahydrofolate ligase (557 aa).

An ATP-binding site is contributed by 65–72 (TPAGEGKT).

This sequence belongs to the formate--tetrahydrofolate ligase family.

It carries out the reaction (6S)-5,6,7,8-tetrahydrofolate + formate + ATP = (6R)-10-formyltetrahydrofolate + ADP + phosphate. Its pathway is one-carbon metabolism; tetrahydrofolate interconversion. The protein is Formate--tetrahydrofolate ligase of Zymomonas mobilis subsp. mobilis (strain ATCC 31821 / ZM4 / CP4).